Consider the following 114-residue polypeptide: UPF0145 protein PF1756 (114 aa).

This sequence belongs to the UPF0145 family.

This is UPF0145 protein PF1756 from Pyrococcus furiosus (strain ATCC 43587 / DSM 3638 / JCM 8422 / Vc1).